The primary structure comprises 214 residues: Probable transaldolase (214 aa).

Residue lysine 83 is the Schiff-base intermediate with substrate of the active site.

The protein belongs to the transaldolase family. Type 3B subfamily.

The protein resides in the cytoplasm. The catalysed reaction is D-sedoheptulose 7-phosphate + D-glyceraldehyde 3-phosphate = D-erythrose 4-phosphate + beta-D-fructose 6-phosphate. The protein operates within carbohydrate degradation; pentose phosphate pathway; D-glyceraldehyde 3-phosphate and beta-D-fructose 6-phosphate from D-ribose 5-phosphate and D-xylulose 5-phosphate (non-oxidative stage): step 2/3. In terms of biological role, transaldolase is important for the balance of metabolites in the pentose-phosphate pathway. The protein is Probable transaldolase of Maridesulfovibrio salexigens (strain ATCC 14822 / DSM 2638 / NCIMB 8403 / VKM B-1763) (Desulfovibrio salexigens).